We begin with the raw amino-acid sequence, 191 residues long: MKKELLEWIISIAVAFVILFIVGKFIVTPYTIKGESMDPTLKDGERVAVNIIGYKTGGLEKGNVVVFHANKNDDYVKRVIGVPGDKVEYKNDTLYVNGKKQDEPYLNYNLKHKQGDYITGTFQVKDLPNANPKSNVIPKGKYLVLGDNREVSKDSRAFGLIDEDQIVGKVSFRFWPFSEFKYNFNPENTKN.

Residues 1 to 7 (MKKELLE) are Cytoplasmic-facing. A helical transmembrane segment spans residues 8 to 28 (WIISIAVAFVILFIVGKFIVT). At 29–191 (PYTIKGESMD…YNFNPENTKN (163 aa)) the chain is on the extracellular side. Active-site residues include S36 and K77.

The protein belongs to the peptidase S26 family.

The protein resides in the cell membrane. It catalyses the reaction Cleavage of hydrophobic, N-terminal signal or leader sequences from secreted and periplasmic proteins.. In terms of biological role, essential for cell viability. This is Signal peptidase IB (spsB) from Staphylococcus aureus (strain MRSA252).